Consider the following 453-residue polypeptide: Growth/differentiation factor 9 (453 aa).

The first 25 residues, 1–25 (MALPNKFFLWFCCFAWLCFPISLDS), serve as a signal peptide directing secretion. Positions 26–318 (QPSRGEAQIV…EGVRLSRHRR (293 aa)) are excised as a propeptide. Asn-106, Asn-163, Asn-236, Asn-255, and Asn-269 each carry an N-linked (GlcNAc...) asparagine glycan. A disordered region spans residues 281–300 (SLHPKRKPSQDPDQKRGLSA). Asn-337 carries an N-linked (GlcNAc...) asparagine glycan. 3 disulfides stabilise this stretch: Cys-352-Cys-418, Cys-381-Cys-450, and Cys-385-Cys-452.

Belongs to the TGF-beta family. As to quaternary structure, homodimer or heterodimer (Potential). But, in contrast to other members of this family, cannot be disulfide-linked. Phosphorylated; phosphorylation is critical for GDF9 function.

Its subcellular location is the secreted. Its function is as follows. Required for ovarian folliculogenesis. The sequence is that of Growth/differentiation factor 9 (GDF9) from Bos taurus (Bovine).